The sequence spans 146 residues: Hemoglobin subunit beta (146 aa).

Residues 2 to 146 (HWSAEEKQLI…VAHALARKYH (145 aa)) form the Globin domain. Residues His63 and His92 each contribute to the heme b site.

The protein belongs to the globin family. In terms of assembly, heterotetramer of two alpha chains and two beta chains. Red blood cells.

Functionally, involved in oxygen transport from the lung to the various peripheral tissues. This is Hemoglobin subunit beta (HBB) from Stercorarius maccormicki (South polar skua).